Reading from the N-terminus, the 241-residue chain is Probable phosphatase Cthe_0111 (241 aa).

Zn(2+)-binding residues include His8, His10, His16, His41, Glu74, His102, His132, Asp192, and His194.

Belongs to the PHP family. Requires Zn(2+) as cofactor.

The protein is Probable phosphatase Cthe_0111 of Acetivibrio thermocellus (strain ATCC 27405 / DSM 1237 / JCM 9322 / NBRC 103400 / NCIMB 10682 / NRRL B-4536 / VPI 7372) (Clostridium thermocellum).